A 366-amino-acid polypeptide reads, in one-letter code: Zinc transporter ZIP13 (366 aa).

Residues 1–5 (MTKQK) are Lumenal-facing. The helical transmembrane segment at 6-26 (LLLNGTFSLILIVACEAQQLP) threads the bilayer. Residues 27–57 (RSHAASSSGPLCEKEAESWGNLLSSERLDAW) are Cytoplasmic-facing. The chain crosses the membrane as a helical span at residues 58–78 (ICSLIGSFMVGLSGIFPLLVI). The Lumenal segment spans residues 79 to 97 (PFETGAALRSEAGSRRLKQ). Residues 98-118 (LLSFAIGGLLGNVFLHLLPEA) traverse the membrane as a helical segment. The Cytoplasmic segment spans residues 119–137 (WAYTCSAAAGEGQSFQQQK). The helical transmembrane segment at 138-158 (LLGLWVIIGFLTFLALEKIFL) threads the bilayer. Topologically, residues 159–225 (EKEEEECPGV…NRIKISGYLN (67 aa)) are lumenal. The segment at 183 to 205 (SGYPPSKVAGKSQRAEKNSTQCN) is disordered. Residues 226–246 (LLANTIDNFTHGLAVAASFLV) traverse the membrane as a helical segment. The Cytoplasmic segment spans residues 247–282 (SRKVGFLTTMAILLHEIPHEVGDFAILLRAGFDRWS). The short motif at 261–266 (HEIPHE) is the XEXPHE-motif element. Residues 283-303 (AAKMQLSTALGGIVGACFAIC) traverse the membrane as a helical segment. The Lumenal segment spans residues 304 to 313 (AQSPKGAGET). The chain crosses the membrane as a helical span at residues 314–334 (VAWILPFTSGGFLYIALVNVV). Over 335-343 (PDLLEEKNP) the chain is Cytoplasmic. A helical membrane pass occupies residues 344–364 (WNSLQQILLLCTGITVMVLLA). The Lumenal segment spans residues 365 to 366 (HN).

It belongs to the ZIP transporter (TC 2.A.5) family. In terms of assembly, homodimer.

The protein localises to the golgi apparatus membrane. It is found in the cytoplasmic vesicle membrane. It localises to the endoplasmic reticulum membrane. The catalysed reaction is Zn(2+)(in) = Zn(2+)(out). Functions as a zinc transporter transporting Zn(2+) from the Golgi apparatus to the cytosol and thus influences the zinc level at least in areas of the cytosol. In Gallus gallus (Chicken), this protein is Zinc transporter ZIP13.